A 401-amino-acid chain; its full sequence is N-acetyllactosaminide beta-1,6-N-acetylglucosaminyl-transferase (401 aa).

Residues 1–7 (MPPSVRY) are Cytoplasmic-facing. Residues 8–28 (FFIVSVTTVIVFIVLYVLSFG) form a helical; Signal-anchor for type II membrane protein membrane-spanning segment. The Lumenal segment spans residues 29–401 (GDQSYQKLNI…EIAIQPSWYF (373 aa)). N-linked (GlcNAc...) asparagine glycans are attached at residues Asn37, Asn255, Asn315, and Asn389.

The protein belongs to the glycosyltransferase 14 family.

It is found in the golgi apparatus membrane. The catalysed reaction is a beta-D-Gal-(1-&gt;4)-beta-D-GlcNAc-(1-&gt;3)-beta-D-Gal-(1-&gt;4)-beta-D-GlcNAc derivative + UDP-N-acetyl-alpha-D-glucosamine = a beta-D-Gal-(1-&gt;4)-beta-D-GlcNAc-(1-&gt;3)-[beta-D-GlcNAc-(1-&gt;6)]-beta-D-Gal-(1-&gt;4)-N-acetyl-beta-D-glucosaminyl derivative + UDP + H(+). It participates in protein modification; protein glycosylation. Functionally, branching enzyme that converts linear into branched poly-N-acetyllactosaminoglycans. Introduces the blood group I antigen during embryonic development. It is closely associated with the development and maturation of erythroid cells. The protein is N-acetyllactosaminide beta-1,6-N-acetylglucosaminyl-transferase (Gcnt2) of Mus musculus (Mouse).